The chain runs to 83 residues: Cytochrome b559 subunit alpha (83 aa).

The helical transmembrane segment at 21–35 (VIHSITIPSLFIAGW) threads the bilayer. His23 lines the heme pocket.

The protein belongs to the PsbE/PsbF family. Heterodimer of an alpha subunit and a beta subunit. PSII is composed of 1 copy each of membrane proteins PsbA, PsbB, PsbC, PsbD, PsbE, PsbF, PsbH, PsbI, PsbJ, PsbK, PsbL, PsbM, PsbT, PsbX, PsbY, PsbZ, Psb30/Ycf12, at least 3 peripheral proteins of the oxygen-evolving complex and a large number of cofactors. It forms dimeric complexes. Heme b is required as a cofactor.

It is found in the plastid. It localises to the chloroplast thylakoid membrane. In terms of biological role, this b-type cytochrome is tightly associated with the reaction center of photosystem II (PSII). PSII is a light-driven water:plastoquinone oxidoreductase that uses light energy to abstract electrons from H(2)O, generating O(2) and a proton gradient subsequently used for ATP formation. It consists of a core antenna complex that captures photons, and an electron transfer chain that converts photonic excitation into a charge separation. This Citrus sinensis (Sweet orange) protein is Cytochrome b559 subunit alpha.